The primary structure comprises 198 residues: dITP/XTP pyrophosphatase (198 aa).

11-16 (THNPGK) contributes to the substrate binding site. Residues Glu-44 and Asp-73 each coordinate Mg(2+). The active-site Proton acceptor is Asp-73. Residues Ser-74, 156-159 (FGYD), Lys-179, and 184-185 (HR) contribute to the substrate site.

It belongs to the HAM1 NTPase family. Homodimer. It depends on Mg(2+) as a cofactor.

It carries out the reaction XTP + H2O = XMP + diphosphate + H(+). The enzyme catalyses dITP + H2O = dIMP + diphosphate + H(+). The catalysed reaction is ITP + H2O = IMP + diphosphate + H(+). Pyrophosphatase that catalyzes the hydrolysis of nucleoside triphosphates to their monophosphate derivatives, with a high preference for the non-canonical purine nucleotides XTP (xanthosine triphosphate), dITP (deoxyinosine triphosphate) and ITP. Seems to function as a house-cleaning enzyme that removes non-canonical purine nucleotides from the nucleotide pool, thus preventing their incorporation into DNA/RNA and avoiding chromosomal lesions. This Bacillus subtilis (strain 168) protein is dITP/XTP pyrophosphatase (ysnA).